Consider the following 477-residue polypeptide: Bifunctional protein HldE (477 aa).

Positions 1–318 are ribokinase; that stretch reads MKVTLPEFER…ENAVRGRADT (318 aa). Lys179 bears the N6-acetyllysine mark. Position 195–198 (195–198) interacts with ATP; the sequence is NLSE. Asp264 is an active-site residue. Residues 344 to 477 are cytidylyltransferase; it reads MTNGVFDILH…IKKIQQDKKG (134 aa).

This sequence in the N-terminal section; belongs to the carbohydrate kinase PfkB family. In the C-terminal section; belongs to the cytidylyltransferase family. In terms of assembly, homodimer.

It carries out the reaction D-glycero-beta-D-manno-heptose 7-phosphate + ATP = D-glycero-beta-D-manno-heptose 1,7-bisphosphate + ADP + H(+). The enzyme catalyses D-glycero-beta-D-manno-heptose 1-phosphate + ATP + H(+) = ADP-D-glycero-beta-D-manno-heptose + diphosphate. The protein operates within nucleotide-sugar biosynthesis; ADP-L-glycero-beta-D-manno-heptose biosynthesis; ADP-L-glycero-beta-D-manno-heptose from D-glycero-beta-D-manno-heptose 7-phosphate: step 1/4. It functions in the pathway nucleotide-sugar biosynthesis; ADP-L-glycero-beta-D-manno-heptose biosynthesis; ADP-L-glycero-beta-D-manno-heptose from D-glycero-beta-D-manno-heptose 7-phosphate: step 3/4. Catalyzes the phosphorylation of D-glycero-D-manno-heptose 7-phosphate at the C-1 position to selectively form D-glycero-beta-D-manno-heptose-1,7-bisphosphate. Its function is as follows. Catalyzes the ADP transfer from ATP to D-glycero-beta-D-manno-heptose 1-phosphate, yielding ADP-D-glycero-beta-D-manno-heptose. The protein is Bifunctional protein HldE of Escherichia coli (strain 55989 / EAEC).